The sequence spans 68 residues: Large ribosomal subunit protein bL35 (68 aa).

It belongs to the bacterial ribosomal protein bL35 family.

This chain is Large ribosomal subunit protein bL35, found in Orientia tsutsugamushi (strain Boryong) (Rickettsia tsutsugamushi).